The primary structure comprises 333 residues: Torsin-1A (333 aa).

The N-terminal stretch at 1-20 is a signal peptide; sequence MKLGRATLALLLLVPCVVRA. Positions 92-252 are interaction with SNAPIN; that stretch reads KPKKPLTLSL…VSVFNNKNSG (161 aa). Asn-144 and Asn-159 each carry an N-linked (GlcNAc...) asparagine glycan. Residues 252 to 333 form an interaction with KLC1 region; sequence GFWHSSLIDR…FTKLDYYLDD (82 aa). Residues 313–333 are interaction with SYNE3; sequence KVFSDKGCKTVFTKLDYYLDD.

The protein belongs to the ClpA/ClpB family. Torsin subfamily. Homohexamer. Interacts with TOR1B; the interaction may be specific of neural tissues. Interacts (ATP-bound) with TOR1AIP1 and TOR1AIP2; the interactions induce ATPase activity. Interacts with KLHL14; preferentially when ATP-free. Interacts with KLC1 (via TPR repeats); the interaction associates TOR1A with the kinesin oligomeric complex. Interacts with COPS4; the interaction associates TOR1A with the CSN complex. Interacts with SNAPIN; the interaction is direct and associates SNAPIN with the CSN complex. Interacts with STON2. Interacts (ATP-bound) with SYNE3 (via KASH domain); the interaction is required for SYNE3 nuclear envelope localization. Interacts with VIM; the interaction associates TOR1A with the cytoskeleton. Interacts with PLEC. Interacts (ATP-bound) with SLC6A3; regulates SLC6A3 transport to the plasma membrane. N-glycosylated. Expressed in brain (at protein level).

It is found in the endoplasmic reticulum lumen. It localises to the nucleus inner membrane. The protein resides in the cell projection. The protein localises to the growth cone. Its subcellular location is the cytoplasmic vesicle membrane. It is found in the cytoplasmic vesicle. It localises to the secretory vesicle. The protein resides in the synaptic vesicle. It catalyses the reaction ATP + H2O = ADP + phosphate + H(+). Functionally, protein with chaperone functions important for the control of protein folding, processing, stability and localization as well as for the reduction of misfolded protein aggregates. Involved in the regulation of synaptic vesicle recycling, controls STON2 protein stability in collaboration with the COP9 signalosome complex (CSN). In the nucleus, may link the cytoskeleton with the nuclear envelope, this mechanism seems to be crucial for the control of nuclear polarity, cell movement and, specifically in neurons, nuclear envelope integrity. Participates in the cellular trafficking and may regulate the subcellular location of multipass membrane proteins such as the dopamine transporter SLC6A3, leading to the modulation of dopamine neurotransmission. In the endoplasmic reticulum, plays a role in the quality control of protein folding by increasing clearance of misfolded proteins such as SGCE variants or holding them in an intermediate state for proper refolding. May have a redundant function with TOR1B in non-neural tissues. The polypeptide is Torsin-1A (Tor1a) (Rattus norvegicus (Rat)).